Reading from the N-terminus, the 664-residue chain is Transketolase 1 (664 aa).

His-26 is a substrate binding site. Thiamine diphosphate contacts are provided by residues His-66 and 114-116 (GPL). Residue Asp-155 participates in Mg(2+) binding. Gly-156 and Asn-185 together coordinate thiamine diphosphate. Mg(2+)-binding residues include Asn-185 and Ile-187. Residues His-260, Arg-357, and Ser-384 each contribute to the substrate site. His-260 is a thiamine diphosphate binding site. Residue Glu-411 is the Proton donor of the active site. Phe-437 lines the thiamine diphosphate pocket. Residues His-461, Asp-469, and Arg-520 each contribute to the substrate site.

This sequence belongs to the transketolase family. In terms of assembly, homodimer. Mg(2+) serves as cofactor. The cofactor is Ca(2+). Requires Mn(2+) as cofactor. It depends on Co(2+) as a cofactor. Thiamine diphosphate is required as a cofactor.

It carries out the reaction D-sedoheptulose 7-phosphate + D-glyceraldehyde 3-phosphate = aldehydo-D-ribose 5-phosphate + D-xylulose 5-phosphate. Its function is as follows. Catalyzes the transfer of a two-carbon ketol group from a ketose donor to an aldose acceptor, via a covalent intermediate with the cofactor thiamine pyrophosphate. In Vibrio parahaemolyticus serotype O3:K6 (strain RIMD 2210633), this protein is Transketolase 1 (tkt1).